The primary structure comprises 97 residues: Large ribosomal subunit protein uL23 (97 aa).

It belongs to the universal ribosomal protein uL23 family. As to quaternary structure, part of the 50S ribosomal subunit. Contacts protein L29, and trigger factor when it is bound to the ribosome.

One of the early assembly proteins it binds 23S rRNA. One of the proteins that surrounds the polypeptide exit tunnel on the outside of the ribosome. Forms the main docking site for trigger factor binding to the ribosome. The chain is Large ribosomal subunit protein uL23 from Myxococcus xanthus (strain DK1622).